Consider the following 1888-residue polypeptide: Nuclear pore membrane glycoprotein 210-like (1888 aa).

Residues 1-35 form the signal peptide; that stretch reads MTGCPASSRRRGFGLFFFLRLHRLLLLFLVLRGTL. Residues N84, N304, N348, N495, N522, N812, and N931 are each glycosylated (N-linked (GlcNAc...) asparagine). One can recognise a BIG2 domain in the interval 1082 to 1154; it reads FPPFRLLPEK…TIQTVNEDTG (73 aa). N-linked (GlcNAc...) asparagine glycosylation is present at N1445. Residues 1813–1833 traverse the membrane as a helical segment; sequence ILLLTLFAVLASTASIFLAYN. The N-linked (GlcNAc...) asparagine glycan is linked to N1859.

The protein belongs to the NUP210 family.

It localises to the nucleus membrane. This chain is Nuclear pore membrane glycoprotein 210-like (NUP210L), found in Homo sapiens (Human).